Consider the following 91-residue polypeptide: MKLAITLALVTLALLCSPASAGICPRFAHVIENLLLGTPSSYETSLKEFEPDDTMKDAGMQMKKVLDSLPQTTRENIMKLTEKIVKSPLCM.

The first 21 residues, 1–21 (MKLAITLALVTLALLCSPASA), serve as a signal peptide directing secretion.

The protein belongs to the secretoglobin family. In terms of assembly, antiparallel homodimer; disulfide-linked. Interaction with LMBR1L is controversial. In terms of tissue distribution, synthesized in the uterus and lung.

Its subcellular location is the secreted. Uteroglobin binds progesterone specifically and with high affinity. It may regulate progesterone concentrations reaching the blastocyst. It is also a potent inhibitor of phospholipase A2. The chain is Uteroglobin (SCGB1A1) from Oryctolagus cuniculus (Rabbit).